The following is a 173-amino-acid chain: MDVAKEKELREAEALMEKNVLLTSIDKVLNWGRGHSFWPVTFGLACCAIEMMAAGGPRVDISRFGYEVFRASPRHADVMIVAGTCTRKMAPLLRMIYDQMPEPKWVIAMGSCASAGGPFADSYSMLTGVDKIVPVDVYIPGCPPRPESLVYGLLQLQHKVNHPDKVRLLKHGK.

4 residues coordinate [4Fe-4S] cluster: Cys-46, Cys-47, Cys-112, and Cys-142.

This sequence belongs to the complex I 20 kDa subunit family. NDH-1 is composed of 14 different subunits. Subunits NuoB, C, D, E, F, and G constitute the peripheral sector of the complex. It depends on [4Fe-4S] cluster as a cofactor.

It is found in the cell membrane. It catalyses the reaction a quinone + NADH + 5 H(+)(in) = a quinol + NAD(+) + 4 H(+)(out). In terms of biological role, NDH-1 shuttles electrons from NADH, via FMN and iron-sulfur (Fe-S) centers, to quinones in the respiratory chain. The immediate electron acceptor for the enzyme in this species is believed to be a menaquinone. Couples the redox reaction to proton translocation (for every two electrons transferred, four hydrogen ions are translocated across the cytoplasmic membrane), and thus conserves the redox energy in a proton gradient. The sequence is that of NADH-quinone oxidoreductase subunit B from Desulfitobacterium hafniense (strain DSM 10664 / DCB-2).